Here is a 1121-residue protein sequence, read N- to C-terminus: RecBCD enzyme subunit RecC (1121 aa).

The protein belongs to the RecC family. Heterotrimer of RecB, RecC and RecD. All subunits contribute to DNA-binding.

Functionally, a helicase/nuclease that prepares dsDNA breaks (DSB) for recombinational DNA repair. Binds to DSBs and unwinds DNA via a highly rapid and processive ATP-dependent bidirectional helicase activity. Unwinds dsDNA until it encounters a Chi (crossover hotspot instigator) sequence from the 3' direction. Cuts ssDNA a few nucleotides 3' to the Chi site. The properties and activities of the enzyme are changed at Chi. The Chi-altered holoenzyme produces a long 3'-ssDNA overhang and facilitates RecA-binding to the ssDNA for homologous DNA recombination and repair. Holoenzyme degrades any linearized DNA that is unable to undergo homologous recombination. In the holoenzyme this subunit recognizes the wild-type Chi sequence, and when added to isolated RecB increases its ATP-dependent helicase processivity. The chain is RecBCD enzyme subunit RecC from Haemophilus influenzae (strain ATCC 51907 / DSM 11121 / KW20 / Rd).